We begin with the raw amino-acid sequence, 116 residues long: Large ribosomal subunit protein bL19 (116 aa).

It belongs to the bacterial ribosomal protein bL19 family.

In terms of biological role, this protein is located at the 30S-50S ribosomal subunit interface and may play a role in the structure and function of the aminoacyl-tRNA binding site. The sequence is that of Large ribosomal subunit protein bL19 from Streptomyces avermitilis (strain ATCC 31267 / DSM 46492 / JCM 5070 / NBRC 14893 / NCIMB 12804 / NRRL 8165 / MA-4680).